The following is a 75-amino-acid chain: Protein B7 (75 aa).

This Human herpesvirus 6B (strain Z29) (HHV-6 variant B) protein is Protein B7 (B7).